The sequence spans 419 residues: UDP-N-acetylglucosamine 1-carboxyvinyltransferase 2 (419 aa).

24 to 25 (KN) contacts phosphoenolpyruvate. Residue Arg94 participates in UDP-N-acetyl-alpha-D-glucosamine binding. Catalysis depends on Cys118, which acts as the Proton donor. Position 118 is a 2-(S-cysteinyl)pyruvic acid O-phosphothioketal (Cys118). UDP-N-acetyl-alpha-D-glucosamine-binding positions include 123 to 127 (RPIDQ), Asp307, and Ile329.

This sequence belongs to the EPSP synthase family. MurA subfamily.

Its subcellular location is the cytoplasm. It catalyses the reaction phosphoenolpyruvate + UDP-N-acetyl-alpha-D-glucosamine = UDP-N-acetyl-3-O-(1-carboxyvinyl)-alpha-D-glucosamine + phosphate. The protein operates within cell wall biogenesis; peptidoglycan biosynthesis. Its function is as follows. Cell wall formation. Adds enolpyruvyl to UDP-N-acetylglucosamine. This Staphylococcus aureus (strain MSSA476) protein is UDP-N-acetylglucosamine 1-carboxyvinyltransferase 2.